The primary structure comprises 642 residues: Threonine--tRNA ligase (642 aa).

Residues 1-61 (MPVITLPDGS…ENDAQLSIIT (61 aa)) enclose the TGS domain. Residues 243–534 (DHRKIGKQLD…LTEEFAGFFP (292 aa)) form a catalytic region. Lys-286 bears the N6-acetyllysine mark. Zn(2+) contacts are provided by Cys-334, His-385, and His-511.

Belongs to the class-II aminoacyl-tRNA synthetase family. As to quaternary structure, homodimer. It depends on Zn(2+) as a cofactor.

Its subcellular location is the cytoplasm. The enzyme catalyses tRNA(Thr) + L-threonine + ATP = L-threonyl-tRNA(Thr) + AMP + diphosphate + H(+). Its function is as follows. Catalyzes the attachment of threonine to tRNA(Thr) in a two-step reaction: L-threonine is first activated by ATP to form Thr-AMP and then transferred to the acceptor end of tRNA(Thr). Also edits incorrectly charged L-seryl-tRNA(Thr). This is Threonine--tRNA ligase from Shigella boydii serotype 18 (strain CDC 3083-94 / BS512).